A 96-amino-acid polypeptide reads, in one-letter code: Ferredoxin-1 (96 aa).

Positions 1–95 constitute a 2Fe-2S ferredoxin-type domain; the sequence is MKVIINGKEF…DCDEIVIESE (95 aa). [2Fe-2S] cluster is bound by residues Cys-34, Cys-39, Cys-42, and Cys-78. A disulfide bridge connects residues Cys-52 and Cys-87.

This sequence belongs to the 2Fe2S plant-type ferredoxin family. [2Fe-2S] cluster is required as a cofactor.

In terms of biological role, ferredoxins are iron-sulfur proteins that transfer electrons in a wide variety of metabolic reactions. This is Ferredoxin-1 (fdx1) from Aquifex aeolicus (strain VF5).